The primary structure comprises 77 residues: Putative defensin-like protein 185 (77 aa).

A signal peptide spans 1-22 (MKNSSILLLLVVFFVISSSGEA). Disulfide bonds link Cys25–Cys77, Cys31–Cys54, Cys40–Cys71, and Cys44–Cys73.

It belongs to the DEFL family.

Its subcellular location is the secreted. The chain is Putative defensin-like protein 185 (LCR39) from Arabidopsis thaliana (Mouse-ear cress).